We begin with the raw amino-acid sequence, 387 residues long: Succinate--CoA ligase [ADP-forming] subunit beta (387 aa).

One can recognise an ATP-grasp domain in the interval 9-245 (KDLLESYGLK…KSQENAKELK (237 aa)). ATP is bound by residues K46, 53–55 (GRG), E100, Y103, and E108. Mg(2+) is bound by residues N200 and D214. Residues N265 and 322–324 (GIV) contribute to the substrate site.

Belongs to the succinate/malate CoA ligase beta subunit family. Heterotetramer of two alpha and two beta subunits. Mg(2+) is required as a cofactor.

It carries out the reaction succinate + ATP + CoA = succinyl-CoA + ADP + phosphate. The enzyme catalyses GTP + succinate + CoA = succinyl-CoA + GDP + phosphate. The protein operates within carbohydrate metabolism; tricarboxylic acid cycle; succinate from succinyl-CoA (ligase route): step 1/1. Succinyl-CoA synthetase functions in the citric acid cycle (TCA), coupling the hydrolysis of succinyl-CoA to the synthesis of either ATP or GTP and thus represents the only step of substrate-level phosphorylation in the TCA. The beta subunit provides nucleotide specificity of the enzyme and binds the substrate succinate, while the binding sites for coenzyme A and phosphate are found in the alpha subunit. The protein is Succinate--CoA ligase [ADP-forming] subunit beta of Francisella tularensis subsp. tularensis (strain WY96-3418).